The following is a 311-amino-acid chain: MKKKIGLLVMAYGTPYKEEDIERYYTHIRRGRKPSPEMLEDLTERYRAIGGISPLATITLEQAKKLEKRLNEVQDEVEYHMYLGLKHIEPFIEDAVKEMHNDGIQDAIALVLAPHYSTFSVKSYVGRAQEEAEKLGNLTIHGIDSWYKEPKFIQYWVDAVKGIYSGMSDAEREKAVLIVSAHSLPEKIIAMGDPYPDQLNETADYIARGAEVANYAVGWQSAGNTPDPWIGPDVQDLTRELNEKYGYTSFVYAPVGFVAEHLEVLYDNDFECKVVTDEIGAKYYRPEMPNASDAFIDCLTDVVVKKKESVM.

Residues Tyr12, Arg29, 45–46 (RY), Ser53, and Tyr124 contribute to the Fe-coproporphyrin III site. Fe(2+) contacts are provided by His182 and Glu263.

This sequence belongs to the ferrochelatase family.

The protein localises to the cytoplasm. The enzyme catalyses Fe-coproporphyrin III + 2 H(+) = coproporphyrin III + Fe(2+). It participates in porphyrin-containing compound metabolism; protoheme biosynthesis. Involved in coproporphyrin-dependent heme b biosynthesis. Catalyzes the insertion of ferrous iron into coproporphyrin III to form Fe-coproporphyrin III. The sequence is that of Coproporphyrin III ferrochelatase 1 from Bacillus thuringiensis subsp. konkukian (strain 97-27).